A 605-amino-acid chain; its full sequence is Protein phosphatase 1D (605 aa).

Residues 1-101 (MAGLYSLGVS…CRRRSSVAFF (101 aa)) are interaction with CHEK1. A PPM-type phosphatase domain is found at 8–375 (GVSVFSDQGG…DNTSAIVICI (368 aa)). Residues 28 to 90 (VVEPEPTAEE…DAGASPAPSR (63 aa)) are disordered. A phosphoserine mark is found at serine 40 and serine 85. Mn(2+) is bound by residues aspartate 105, glycine 106, aspartate 314, and aspartate 366. A disordered region spans residues 516 to 591 (STPGQMKAQE…RRLRGQKKIG (76 aa)). Polar residues-rich tracts occupy residues 530 to 544 (PPTN…SNSG) and 555 to 577 (LSRS…NSVK). Basic residues predominate over residues 579–588 (TMRRRLRGQK).

The protein belongs to the PP2C family. In terms of assembly, interacts with CHEK1 and CHEK2; dephosphorylates them. Interacts with MAPK14. It depends on Mg(2+) as a cofactor. Requires Mn(2+) as cofactor. Expressed in fetal and adult brain. Also detected in fetal liver and skeletal muscle, but not in their adult counterparts.

The protein localises to the nucleus. The protein resides in the cytoplasm. Its subcellular location is the cytosol. It catalyses the reaction O-phospho-L-seryl-[protein] + H2O = L-seryl-[protein] + phosphate. The enzyme catalyses O-phospho-L-threonyl-[protein] + H2O = L-threonyl-[protein] + phosphate. Its function is as follows. Involved in the negative regulation of p53 expression. Required for the relief of p53-dependent checkpoint mediated cell cycle arrest. Binds to and dephosphorylates 'Ser-15' of TP53 and 'Ser-345' of CHEK1 which contributes to the functional inactivation of these proteins. Mediates MAPK14 dephosphorylation and inactivation. Is also an important regulator of global heterochromatin silencing and critical in maintaining genome integrity. The polypeptide is Protein phosphatase 1D (PPM1D) (Homo sapiens (Human)).